A 75-amino-acid polypeptide reads, in one-letter code: Nigwaprin-a (75 aa).

An N-terminal signal peptide occupies residues 1 to 24 (MSSGGLLLLLGLLTLWAELTPVSG). A WAP domain is found at 27-72 (RPVKPGLCPPRPQKPPCVKECKNDWSCRGEQKCCRYGCIYECRDPI). 4 disulfides stabilise this stretch: Cys34/Cys60, Cys43/Cys64, Cys47/Cys59, and Cys53/Cys68.

This sequence belongs to the venom waprin family. In terms of tissue distribution, expressed by the venom gland.

The protein localises to the secreted. Damages membranes of susceptible bacteria. Has no hemolytic activity. Not toxic to mice. Does not inhibit the proteinases elastase and cathepsin G. This chain is Nigwaprin-a, found in Cryptophis nigrescens (Eastern small-eyed snake).